The primary structure comprises 223 residues: Small ribosomal subunit protein uS3 (223 aa).

The 70-residue stretch at 39 to 108 folds into the KH type-2 domain; that stretch reads IRNFVKKNSY…NILINIVEVK (70 aa).

It belongs to the universal ribosomal protein uS3 family. In terms of assembly, part of the 30S ribosomal subunit. Forms a tight complex with proteins S10 and S14.

Binds the lower part of the 30S subunit head. Binds mRNA in the 70S ribosome, positioning it for translation. This Clostridium botulinum (strain 657 / Type Ba4) protein is Small ribosomal subunit protein uS3.